The primary structure comprises 396 residues: Acetate kinase (396 aa).

Asparagine 6 lines the Mg(2+) pocket. Lysine 13 is an ATP binding site. Arginine 89 is a substrate binding site. The active-site Proton donor/acceptor is the aspartate 145. Residues 205 to 209 (HLGNG), 280 to 282 (DMR), and 329 to 333 (GVGEN) contribute to the ATP site. Mg(2+) is bound at residue glutamate 383.

The protein belongs to the acetokinase family. As to quaternary structure, homodimer. Mg(2+) is required as a cofactor. Requires Mn(2+) as cofactor.

It localises to the cytoplasm. It catalyses the reaction acetate + ATP = acetyl phosphate + ADP. It functions in the pathway metabolic intermediate biosynthesis; acetyl-CoA biosynthesis; acetyl-CoA from acetate: step 1/2. Functionally, catalyzes the formation of acetyl phosphate from acetate and ATP. Can also catalyze the reverse reaction. The chain is Acetate kinase from Mesoplasma florum (strain ATCC 33453 / NBRC 100688 / NCTC 11704 / L1) (Acholeplasma florum).